We begin with the raw amino-acid sequence, 249 residues long: Probable amino-acid import ATP-binding protein YxeO (249 aa).

In terms of domain architecture, ABC transporter spans 2 to 239; it reads ITVKNIRKAF…PKNERTKRFI (238 aa). Residue 34 to 41 participates in ATP binding; that stretch reads GPSGSGKS.

The protein belongs to the ABC transporter superfamily. The complex is composed of two ATP-binding proteins (YxeO), two transmembrane proteins (YxeN) and a solute-binding protein (YxeM).

Its subcellular location is the cell membrane. Probably part of the ABC transporter complex YxeMNO that could be involved in amino-acid import. May transport S-methylcysteine. Responsible for energy coupling to the transport system. The polypeptide is Probable amino-acid import ATP-binding protein YxeO (yxeO) (Bacillus subtilis (strain 168)).